The following is a 130-amino-acid chain: MKRTALLHADLSRAIAALGHGDMIVIGDAGLPIPPGPLRIDLAVTPGLPAVADVLAAVLSEMQVERALVATEAVERAGGALPGWAGALPVAPQTLSHEEFKRLTRDARAVVRTGECTPYANVILCAGVTF.

The active-site Proton donor is histidine 20. Substrate-binding positions include aspartate 28, histidine 97, and 119 to 121 (YAN).

It belongs to the RbsD / FucU family. RbsD subfamily. As to quaternary structure, homodecamer.

Its subcellular location is the cytoplasm. The enzyme catalyses beta-D-ribopyranose = beta-D-ribofuranose. It participates in carbohydrate metabolism; D-ribose degradation; D-ribose 5-phosphate from beta-D-ribopyranose: step 1/2. In terms of biological role, catalyzes the interconversion of beta-pyran and beta-furan forms of D-ribose. The chain is D-ribose pyranase from Paracidovorax citrulli (strain AAC00-1) (Acidovorax citrulli).